A 179-amino-acid polypeptide reads, in one-letter code: MARLENHYKEKVVPELMARFGYKSVMEVPRLVKITLNMGVGEAVADKKILQNAVENMQAIGGQKPIVTHARKSIAGFKIREGMPVGCKVTLRRARMYEFLDRLISVAIPRIRDFRGLNPKAFDGRGNYSMGVREQIIFPEIDYDKIDAIRGMDITITSTAKTDAEAKALLEAFKFPFRT.

The protein belongs to the universal ribosomal protein uL5 family. As to quaternary structure, part of the 50S ribosomal subunit; part of the 5S rRNA/L5/L18/L25 subcomplex. Contacts the 5S rRNA and the P site tRNA. Forms a bridge to the 30S subunit in the 70S ribosome.

Its function is as follows. This is one of the proteins that bind and probably mediate the attachment of the 5S RNA into the large ribosomal subunit, where it forms part of the central protuberance. In the 70S ribosome it contacts protein S13 of the 30S subunit (bridge B1b), connecting the 2 subunits; this bridge is implicated in subunit movement. Contacts the P site tRNA; the 5S rRNA and some of its associated proteins might help stabilize positioning of ribosome-bound tRNAs. The sequence is that of Large ribosomal subunit protein uL5 from Methylococcus capsulatus (strain ATCC 33009 / NCIMB 11132 / Bath).